We begin with the raw amino-acid sequence, 504 residues long: Maturase K (504 aa).

The protein belongs to the intron maturase 2 family. MatK subfamily.

The protein resides in the plastid. The protein localises to the chloroplast. Usually encoded in the trnK tRNA gene intron. Probably assists in splicing its own and other chloroplast group II introns. The protein is Maturase K of Kokia drynarioides (Hawaiian tree cotton).